A 350-amino-acid chain; its full sequence is Peroxidase 10 (350 aa).

Positions methionine 1–serine 27 are cleaved as a signal peptide. Intrachain disulfides connect cysteine 57–cysteine 137, cysteine 90–cysteine 95, cysteine 143–cysteine 346, and cysteine 222–cysteine 256. Histidine 88 (proton acceptor) is an active-site residue. Ca(2+) is bound by residues aspartate 89, valine 92, glycine 94, aspartate 96, and serine 98. Asparagine 102 carries N-linked (GlcNAc...) asparagine glycosylation. Proline 185 lines the substrate pocket. Residue asparagine 193 is glycosylated (N-linked (GlcNAc...) asparagine). A heme b-binding site is contributed by histidine 215. Threonine 216 lines the Ca(2+) pocket. Ca(2+) is bound by residues aspartate 270, serine 273, and aspartate 278.

The protein belongs to the peroxidase family. Classical plant (class III) peroxidase subfamily. Heme b serves as cofactor. The cofactor is Ca(2+). As to expression, expressed in the whole plant, with the highest expression in roots.

The protein localises to the secreted. It catalyses the reaction 2 a phenolic donor + H2O2 = 2 a phenolic radical donor + 2 H2O. Its function is as follows. Removal of H(2)O(2), oxidation of toxic reductants, biosynthesis and degradation of lignin, suberization, auxin catabolism, response to environmental stresses such as wounding, pathogen attack and oxidative stress. These functions might be dependent on each isozyme/isoform in each plant tissue. The polypeptide is Peroxidase 10 (PER10) (Arabidopsis thaliana (Mouse-ear cress)).